Reading from the N-terminus, the 500-residue chain is Proline/betaine transporter (500 aa).

Residues methionine 1–glutamate 37 lie on the Cytoplasmic side of the membrane. The chain crosses the membrane as a helical span at residues tryptophan 38–glycine 58. At alanine 59–methionine 65 the chain is on the periplasmic side. The chain crosses the membrane as a helical span at residues valine 66–phenylalanine 86. Over glycine 87–lysine 97 the chain is Cytoplasmic. The chain crosses the membrane as a helical span at residues isoleucine 98 to serine 118. Topologically, residues tyrosine 119 to threonine 121 are periplasmic. A helical membrane pass occupies residues isoleucine 122–glycine 142. The Cytoplasmic portion of the chain corresponds to glycine 143–aspartate 169. Residues phenylalanine 170–valine 190 traverse the membrane as a helical segment. Over glycine 191–asparagine 194 the chain is Periplasmic. A helical membrane pass occupies residues phenylalanine 195–leucine 215. Residues tyrosine 216–serine 260 are Cytoplasmic-facing. The chain crosses the membrane as a helical span at residues leucine 261–tyrosine 281. The Periplasmic portion of the chain corresponds to methionine 282–glycine 297. Residues valine 298–leucine 318 traverse the membrane as a helical segment. The Cytoplasmic segment spans residues serine 319–arginine 325. The helical transmembrane segment at proline 326–isoleucine 346 threads the bilayer. Residues asparagine 347–valine 350 lie on the Periplasmic side of the membrane. Residues isoleucine 351 to valine 371 form a helical membrane-spanning segment. Over methionine 372–alanine 390 the chain is Cytoplasmic. Residues alanine 391 to valine 411 traverse the membrane as a helical segment. Topologically, residues glutamate 412 to asparagine 416 are periplasmic. The chain crosses the membrane as a helical span at residues leucine 417–threonine 437. Topologically, residues methionine 438–glutamate 500 are cytoplasmic. Residues alanine 453–isoleucine 498 adopt a coiled-coil conformation.

Belongs to the major facilitator superfamily. Metabolite:H+ Symporter (MHS) family (TC 2.A.1.6) family.

The protein resides in the cell inner membrane. Its function is as follows. Proton symporter that senses osmotic shifts and responds by importing osmolytes such as proline, glycine betaine, stachydrine, pipecolic acid, ectoine and taurine. It is both an osmosensor and an osmoregulator which is available to participate early in the bacterial osmoregulatory response. This is Proline/betaine transporter (proP) from Escherichia coli O157:H7.